The chain runs to 273 residues: Large ribosomal subunit protein uL2cz/uL2cy (273 aa).

Disordered stretches follow at residues 1–25 and 225–253; these read MAKH…VKSN and PVDH…YPAL.

The protein belongs to the universal ribosomal protein uL2 family. Part of the 50S ribosomal subunit.

Its subcellular location is the plastid. The protein localises to the chloroplast. The chain is Large ribosomal subunit protein uL2cz/uL2cy (rpl2-A) from Triticum aestivum (Wheat).